A 231-amino-acid chain; its full sequence is GTP cyclohydrolase III (231 aa).

The protein belongs to the archaeal-type GTP cyclohydrolase family.

The catalysed reaction is GTP + 3 H2O = 2-amino-5-formylamino-6-(5-phospho-D-ribosylamino)pyrimidin-4(3H)-one + 2 phosphate + 2 H(+). Its function is as follows. Catalyzes the formation of 2-amino-5-formylamino-6-ribofuranosylamino-4(3H)-pyrimidinone ribonucleotide monophosphate and inorganic phosphate from GTP. Also has an independent pyrophosphate phosphohydrolase activity. The chain is GTP cyclohydrolase III from Saccharolobus solfataricus (strain ATCC 35092 / DSM 1617 / JCM 11322 / P2) (Sulfolobus solfataricus).